The chain runs to 308 residues: Tetraacyldisaccharide 4'-kinase (308 aa).

63 to 70 (SFGGNGKT) contributes to the ATP binding site.

The protein belongs to the LpxK family.

The catalysed reaction is a lipid A disaccharide + ATP = a lipid IVA + ADP + H(+). It functions in the pathway glycolipid biosynthesis; lipid IV(A) biosynthesis; lipid IV(A) from (3R)-3-hydroxytetradecanoyl-[acyl-carrier-protein] and UDP-N-acetyl-alpha-D-glucosamine: step 6/6. Transfers the gamma-phosphate of ATP to the 4'-position of a tetraacyldisaccharide 1-phosphate intermediate (termed DS-1-P) to form tetraacyldisaccharide 1,4'-bis-phosphate (lipid IVA). In Campylobacter jejuni subsp. jejuni serotype O:2 (strain ATCC 700819 / NCTC 11168), this protein is Tetraacyldisaccharide 4'-kinase.